Here is a 280-residue protein sequence, read N- to C-terminus: 2,3,4,5-tetrahydropyridine-2,6-dicarboxylate N-succinyltransferase (280 aa).

Residues Arg-107 and Asp-144 each contribute to the substrate site.

Belongs to the transferase hexapeptide repeat family. In terms of assembly, homotrimer.

The protein resides in the cytoplasm. The catalysed reaction is (S)-2,3,4,5-tetrahydrodipicolinate + succinyl-CoA + H2O = (S)-2-succinylamino-6-oxoheptanedioate + CoA. Its pathway is amino-acid biosynthesis; L-lysine biosynthesis via DAP pathway; LL-2,6-diaminopimelate from (S)-tetrahydrodipicolinate (succinylase route): step 1/3. In Granulibacter bethesdensis (strain ATCC BAA-1260 / CGDNIH1), this protein is 2,3,4,5-tetrahydropyridine-2,6-dicarboxylate N-succinyltransferase.